Consider the following 208-residue polypeptide: MEPFTMHRGVAAPLLRINIDTDAIIPSREMKRVSRHGLAEGLFAGWRYLAGTDRSPDPLFVLNQPEYTGASILLAGSNFGCGSSREHAVWALKEFGIRAIVAPGFGAIFHNNCVRNGLLPVVLPMATVQALADDCAAAPATRQVTVDLRQLEVVSPAGARYGFTLGSEQRQMLLEGLDPIALTLKLASSIDAFQGADRLRRPWIHFDG.

It belongs to the LeuD family. LeuD type 1 subfamily. As to quaternary structure, heterodimer of LeuC and LeuD.

The enzyme catalyses (2R,3S)-3-isopropylmalate = (2S)-2-isopropylmalate. It participates in amino-acid biosynthesis; L-leucine biosynthesis; L-leucine from 3-methyl-2-oxobutanoate: step 2/4. In terms of biological role, catalyzes the isomerization between 2-isopropylmalate and 3-isopropylmalate, via the formation of 2-isopropylmaleate. The chain is 3-isopropylmalate dehydratase small subunit (leuD) from Cupriavidus necator (Alcaligenes eutrophus).